The following is a 126-amino-acid chain: Histone H2B type 2-B (126 aa).

The segment covering 1–12 (MPDPAKSAPAPK) has biased composition (low complexity). Residues 1–36 (MPDPAKSAPAPKKGSKKAVTKVQKKDGKKRKRSRKE) form a disordered region. P2 is modified (N-acetylproline). Position 6 is an N6-(2-hydroxyisobutyryl)lysine; alternate (K6). K6 carries the post-translational modification N6-(beta-hydroxybutyryl)lysine; alternate. The residue at position 6 (K6) is an N6-acetyllysine; alternate. Position 6 is an N6-butyryllysine; alternate (K6). K6 carries the N6-crotonyllysine; alternate modification. K6 bears the N6-lactoyllysine; alternate mark. K6 is covalently cross-linked (Glycyl lysine isopeptide (Lys-Gly) (interchain with G-Cter in SUMO2); alternate). S7 bears the ADP-ribosylserine mark. Position 12 is an N6-(beta-hydroxybutyryl)lysine; alternate (K12). K12 and K13 each carry N6-acetyllysine; alternate. An N6-crotonyllysine; alternate mark is found at K12 and K13. The residue at position 12 (K12) is an N6-lactoyllysine; alternate. An N6-(2-hydroxyisobutyryl)lysine; alternate modification is found at K13. Residue S15 is modified to Phosphoserine; by STK4/MST1. Residues K16, K17, K21, and K24 each carry the N6-acetyllysine; alternate modification. N6-crotonyllysine; alternate occurs at positions 16, 17, 21, and 24. N6-lactoyllysine; alternate occurs at positions 16, 17, 21, and 24. K17 carries the post-translational modification N6-glutaryllysine; alternate. Residues K21 and K24 each carry the N6-(2-hydroxyisobutyryl)lysine; alternate modification. K21 bears the N6-(beta-hydroxybutyryl)lysine; alternate mark. Position 21 is an N6-butyryllysine; alternate (K21). A Glycyl lysine isopeptide (Lys-Gly) (interchain with G-Cter in SUMO2); alternate cross-link involves residue K21. Position 25 is an N6-(2-hydroxyisobutyryl)lysine (K25). K35 is modified (N6-(2-hydroxyisobutyryl)lysine; alternate). N6-(beta-hydroxybutyryl)lysine; alternate is present on K35. Position 35 is an N6-crotonyllysine; alternate (K35). Residue K35 is modified to N6-glutaryllysine; alternate. Position 35 is an N6-succinyllysine; alternate (K35). Residue K35 forms a Glycyl lysine isopeptide (Lys-Gly) (interchain with G-Cter in ubiquitin); alternate linkage. E36 is modified (polyADP-ribosyl glutamic acid). A Phosphoserine; by AMPK modification is found at S37. An N6-(2-hydroxyisobutyryl)lysine; alternate mark is found at K44, K47, and K58. An N6-lactoyllysine; alternate modification is found at K44. N6-glutaryllysine; alternate occurs at positions 44 and 47. K47 carries the post-translational modification N6-methyllysine; alternate. Position 58 is an N6,N6-dimethyllysine; alternate (K58). The residue at position 80 (R80) is a Dimethylated arginine. Residue K86 is modified to N6-(2-hydroxyisobutyryl)lysine; alternate. An N6-acetyllysine; alternate modification is found at K86. The residue at position 86 (K86) is an N6-lactoyllysine; alternate. Residue K86 is modified to N6,N6,N6-trimethyllysine; alternate. R87 and R93 each carry omega-N-methylarginine. The residue at position 109 (K109) is an N6-(2-hydroxyisobutyryl)lysine; alternate. An N6-(beta-hydroxybutyryl)lysine; alternate modification is found at K109. At K109 the chain carries N6-lactoyllysine; alternate. The residue at position 109 (K109) is an N6-glutaryllysine; alternate. Residue K109 is modified to N6-methyllysine; alternate. Residue S113 is glycosylated (O-linked (GlcNAc) serine). Position 116 is a phosphothreonine (T116). Residues K117 and K121 each carry the N6-(2-hydroxyisobutyryl)lysine; alternate modification. K117 is subject to N6-(beta-hydroxybutyryl)lysine; alternate. N6-lactoyllysine; alternate occurs at positions 117 and 121. N6-glutaryllysine; alternate is present on residues K117 and K121. K117 and K121 each carry N6-succinyllysine; alternate. Position 117 is an N6-methylated lysine; alternate (K117). A Glycyl lysine isopeptide (Lys-Gly) (interchain with G-Cter in ubiquitin); alternate cross-link involves residue K121.

This sequence belongs to the histone H2B family. As to quaternary structure, the nucleosome is a histone octamer containing two molecules each of H2A, H2B, H3 and H4 assembled in one H3-H4 heterotetramer and two H2A-H2B heterodimers. The octamer wraps approximately 147 bp of DNA. In terms of processing, monoubiquitination at Lys-35 (H2BK34Ub) by the MSL1/MSL2 dimer is required for histone H3 'Lys-4' (H3K4me) and 'Lys-79' (H3K79me) methylation and transcription activation at specific gene loci, such as HOXA9 and MEIS1 loci. Similarly, monoubiquitination at Lys-121 (H2BK120Ub) by the RNF20/40 complex gives a specific tag for epigenetic transcriptional activation and is also prerequisite for histone H3 'Lys-4' and 'Lys-79' methylation. It also functions cooperatively with the FACT dimer to stimulate elongation by RNA polymerase II. H2BK120Ub also acts as a regulator of mRNA splicing: deubiquitination by USP49 is required for efficient cotranscriptional splicing of a large set of exons. Phosphorylated on Ser-15 (H2BS14ph) by STK4/MST1 during apoptosis; which facilitates apoptotic chromatin condensation. Also phosphorylated on Ser-15 in response to DNA double strand breaks (DSBs), and in correlation with somatic hypermutation and immunoglobulin class-switch recombination. Phosphorylation at Ser-37 (H2BS36ph) by AMPK in response to stress promotes transcription. Post-translationally, glcNAcylation at Ser-113 promotes monoubiquitination of Lys-121. It fluctuates in response to extracellular glucose, and associates with transcribed genes. In terms of processing, ADP-ribosylated by PARP1 or PARP2 on Ser-7 (H2BS6ADPr) in response to DNA damage. H2BS6ADPr promotes recruitment of CHD1L. Poly ADP-ribosylation on Glu-36 (H2BE35ADPr) by PARP1 regulates adipogenesis: it inhibits phosphorylation at Ser-37 (H2BS36ph), thereby blocking expression of pro-adipogenetic genes. Crotonylation (Kcr) is specifically present in male germ cells and marks testis-specific genes in post-meiotic cells, including X-linked genes that escape sex chromosome inactivation in haploid cells. Crotonylation marks active promoters and enhancers and confers resistance to transcriptional repressors. It is also associated with post-meiotically activated genes on autosomes. Post-translationally, hydroxybutyrylation of histones is induced by starvation. In terms of processing, lactylated in macrophages by EP300/P300 by using lactoyl-CoA directly derived from endogenous or exogenous lactate, leading to stimulates gene transcription.

It localises to the nucleus. The protein resides in the chromosome. In terms of biological role, core component of nucleosome. Nucleosomes wrap and compact DNA into chromatin, limiting DNA accessibility to the cellular machineries which require DNA as a template. Histones thereby play a central role in transcription regulation, DNA repair, DNA replication and chromosomal stability. DNA accessibility is regulated via a complex set of post-translational modifications of histones, also called histone code, and nucleosome remodeling. The chain is Histone H2B type 2-B from Mus musculus (Mouse).